Reading from the N-terminus, the 259-residue chain is 3-methyl-2-oxobutanoate hydroxymethyltransferase (259 aa).

Mg(2+) is bound by residues aspartate 44 and aspartate 83. 3-methyl-2-oxobutanoate contacts are provided by residues 44–45 (DS), aspartate 83, and lysine 112. Glutamate 114 serves as a coordination point for Mg(2+). The active-site Proton acceptor is glutamate 177.

Belongs to the PanB family. In terms of assembly, homodecamer; pentamer of dimers. Mg(2+) is required as a cofactor.

The protein resides in the cytoplasm. The enzyme catalyses 3-methyl-2-oxobutanoate + (6R)-5,10-methylene-5,6,7,8-tetrahydrofolate + H2O = 2-dehydropantoate + (6S)-5,6,7,8-tetrahydrofolate. It functions in the pathway cofactor biosynthesis; (R)-pantothenate biosynthesis; (R)-pantoate from 3-methyl-2-oxobutanoate: step 1/2. Functionally, catalyzes the reversible reaction in which hydroxymethyl group from 5,10-methylenetetrahydrofolate is transferred onto alpha-ketoisovalerate to form ketopantoate. This Nitratiruptor sp. (strain SB155-2) protein is 3-methyl-2-oxobutanoate hydroxymethyltransferase.